Consider the following 238-residue polypeptide: ATP synthase subunit a (238 aa).

A run of 4 helical transmembrane segments spans residues 17-37 (LSNILMITVTCVIVLLIAIIC), 80-100 (ITLLMFIFVANMLGLPFQIAI), 112-132 (DPIVTLTLAIMVLGLTHYYGI), and 194-214 (IFVGVLAIIPALLWQGFSIFI).

This sequence belongs to the ATPase A chain family. F-type ATPases have 2 components, CF(1) - the catalytic core - and CF(0) - the membrane proton channel. CF(1) has five subunits: alpha(3), beta(3), gamma(1), delta(1), epsilon(1). CF(0) has three main subunits: a(1), b(2) and c(9-12). The alpha and beta chains form an alternating ring which encloses part of the gamma chain. CF(1) is attached to CF(0) by a central stalk formed by the gamma and epsilon chains, while a peripheral stalk is formed by the delta and b chains.

The protein resides in the cell membrane. Key component of the proton channel; it plays a direct role in the translocation of protons across the membrane. In Listeria innocua serovar 6a (strain ATCC BAA-680 / CLIP 11262), this protein is ATP synthase subunit a.